Reading from the N-terminus, the 86-residue chain is Small ribosomal subunit protein bS16 (86 aa).

This sequence belongs to the bacterial ribosomal protein bS16 family.

The chain is Small ribosomal subunit protein bS16 from Carboxydothermus hydrogenoformans (strain ATCC BAA-161 / DSM 6008 / Z-2901).